The following is a 270-amino-acid chain: Regulatory protein RecX (270 aa).

Belongs to the RecX family.

It localises to the cytoplasm. Its function is as follows. Modulates RecA activity. The sequence is that of Regulatory protein RecX from Bacillus cereus (strain AH187).